The sequence spans 500 residues: Ferulic acid decarboxylase 1 (500 aa).

Mn(2+)-binding residues include Asn168, His191, and Glu233. Prenylated FMN is bound by residues 168-173, 190-191, and Glu233; these read NWSIAR and QH. Catalysis depends on Glu282, which acts as the Proton donor. A prenylated FMN-binding site is contributed by Lys391.

Belongs to the UbiD family. UbiD-like/FDC subfamily. As to quaternary structure, homodimer. May form higher order oligomers. Requires Mn(2+) as cofactor. Prenylated FMN serves as cofactor.

It localises to the cytoplasm. The catalysed reaction is (E)-4-coumarate + H(+) = 4-vinylphenol + CO2. It catalyses the reaction (E)-cinnamate + H(+) = styrene + CO2. It carries out the reaction (E)-ferulate + H(+) = 2-methoxy-4-vinylphenol + CO2. In terms of biological role, catalyzes the reversible decarboxylation of aromatic carboxylic acids like ferulic acid, p-coumaric acid or cinnamic acid, producing the corresponding vinyl derivatives 4-vinylphenol, 4-vinylguaiacol, and styrene, respectively, which play the role of aroma metabolites. In Aspergillus niger (strain ATCC MYA-4892 / CBS 513.88 / FGSC A1513), this protein is Ferulic acid decarboxylase 1.